Here is a 342-residue protein sequence, read N- to C-terminus: Farnesyl pyrophosphate synthase 1 (342 aa).

Isopentenyl diphosphate contacts are provided by Lys48, Arg51, and Gln86. Residues Asp93 and Asp97 each contribute to the Mg(2+) site. Arg102 serves as a coordination point for dimethylallyl diphosphate. Position 103 (Arg103) interacts with isopentenyl diphosphate. Residues Lys190, Thr191, Gln229, Lys246, and Lys255 each contribute to the dimethylallyl diphosphate site.

Belongs to the FPP/GGPP synthase family. Requires Mg(2+) as cofactor.

Its subcellular location is the cytoplasm. It catalyses the reaction isopentenyl diphosphate + dimethylallyl diphosphate = (2E)-geranyl diphosphate + diphosphate. The catalysed reaction is isopentenyl diphosphate + (2E)-geranyl diphosphate = (2E,6E)-farnesyl diphosphate + diphosphate. Its pathway is isoprenoid biosynthesis; farnesyl diphosphate biosynthesis; farnesyl diphosphate from geranyl diphosphate and isopentenyl diphosphate: step 1/1. The protein operates within isoprenoid biosynthesis; geranyl diphosphate biosynthesis; geranyl diphosphate from dimethylallyl diphosphate and isopentenyl diphosphate: step 1/1. Its function is as follows. Catalyzes the sequential condensation of isopentenyl pyrophosphate with the allylic pyrophosphates, dimethylallyl pyrophosphate, and then with the resultant geranylpyrophosphate to the ultimate product farnesyl pyrophosphate. This is Farnesyl pyrophosphate synthase 1 (FPS1) from Parthenium argentatum (Guayule rubber plant).